A 201-amino-acid polypeptide reads, in one-letter code: Small ribosomal subunit protein uS5 (201 aa).

The segment at 1–28 (MAGPQRRGSGAGGGERRDRKGRDGGASA) is disordered. Over residues 14–23 (GERRDRKGRD) the composition is skewed to basic and acidic residues. Residues 34–97 (YVERVVAINR…EEAKKNFFKV (64 aa)) enclose the S5 DRBM domain.

The protein belongs to the universal ribosomal protein uS5 family. In terms of assembly, part of the 30S ribosomal subunit. Contacts proteins S4 and S8.

Its function is as follows. With S4 and S12 plays an important role in translational accuracy. Functionally, located at the back of the 30S subunit body where it stabilizes the conformation of the head with respect to the body. The protein is Small ribosomal subunit protein uS5 of Streptomyces griseus subsp. griseus (strain JCM 4626 / CBS 651.72 / NBRC 13350 / KCC S-0626 / ISP 5235).